A 484-amino-acid chain; its full sequence is Rho guanine nucleotide exchange factor 35 (484 aa).

The disordered stretch occupies residues 139-418 (FSSDLGSEEE…ALIAPEDSPH (280 aa)). Ser-184 bears the Phosphoserine mark. The span at 217 to 237 (ESQGLLHPQEVQVLEEQGQQE) shows a compositional bias: low complexity. Residues 266–278 (NDEKGEQKQKQEQ) are compositionally biased toward basic and acidic residues. Acidic residues predominate over residues 299 to 309 (GLNDGEWEQED). 2 stretches are compositionally biased toward basic and acidic residues: residues 323–368 (GEER…KEKG) and 394–404 (RSREEENEHHG).

This chain is Rho guanine nucleotide exchange factor 35 (ARHGEF35), found in Homo sapiens (Human).